Consider the following 553-residue polypeptide: Glutamine--tRNA ligase (553 aa).

The 'HIGH' region signature appears at 34–44; that stretch reads PEPNGYLHIGH. ATP-binding positions include 35-37 and 41-47; these read EPN and HIGHAKS. 2 residues coordinate L-glutamine: Asp-68 and Tyr-213. ATP is bound by residues Thr-232 and 262-263; that span reads RL. A 'KMSKS' region motif is present at residues 269–273; the sequence is LTSKR.

This sequence belongs to the class-I aminoacyl-tRNA synthetase family. In terms of assembly, monomer.

It is found in the cytoplasm. The enzyme catalyses tRNA(Gln) + L-glutamine + ATP = L-glutaminyl-tRNA(Gln) + AMP + diphosphate. The chain is Glutamine--tRNA ligase from Psychromonas ingrahamii (strain DSM 17664 / CCUG 51855 / 37).